We begin with the raw amino-acid sequence, 30 residues long: U1-poneritoxin-Ni3d (30 aa).

Belongs to the ponericin-G family. As to expression, expressed by the venom gland.

The protein localises to the secreted. Functionally, has activity against some Gram-positive bacteria and S.cerevisiae. Has a non-hemolytic activity. The protein is U1-poneritoxin-Ni3d of Neoponera inversa (Ant).